Consider the following 492-residue polypeptide: B3 domain-containing protein REM3 (492 aa).

The TF-B3 1 DNA-binding region spans 12–104; that stretch reads NRPFFVRSLA…VFHVTPSGRS (93 aa). The span at 105–116 shows a compositional bias: low complexity; sequence FSQIRTSSSSGD. The segment at 105 to 134 is disordered; it reads FSQIRTSSSSGDYDSDDDDDEAGDDDSDSK. Positions 117–131 are enriched in acidic residues; that stretch reads YDSDDDDDEAGDDDS. 2 DNA-binding regions (TF-B3) span residues 154–250 and 286–382; these read YCLL…LCFK and FLTV…FCSE. The span at 385–395 shows a compositional bias: basic and acidic residues; that stretch reads IEQEEAPEERG. The segment at 385 to 427 is disordered; sequence IEQEEAPEERGTPLPKRARVSAEVGHSRRTQAPNKSSDDPKIL.

The protein localises to the nucleus. The polypeptide is B3 domain-containing protein REM3 (REM3) (Arabidopsis thaliana (Mouse-ear cress)).